The primary structure comprises 900 residues: Alanine--tRNA ligase (900 aa).

Zn(2+) is bound by residues His-580, His-584, Cys-683, and His-687.

Belongs to the class-II aminoacyl-tRNA synthetase family. It depends on Zn(2+) as a cofactor.

The protein resides in the cytoplasm. The catalysed reaction is tRNA(Ala) + L-alanine + ATP = L-alanyl-tRNA(Ala) + AMP + diphosphate. Its function is as follows. Catalyzes the attachment of alanine to tRNA(Ala) in a two-step reaction: alanine is first activated by ATP to form Ala-AMP and then transferred to the acceptor end of tRNA(Ala). Also edits incorrectly charged Ser-tRNA(Ala) and Gly-tRNA(Ala) via its editing domain. The protein is Alanine--tRNA ligase of Mycolicibacterium paratuberculosis (strain ATCC BAA-968 / K-10) (Mycobacterium paratuberculosis).